The primary structure comprises 1229 residues: Receptor-type adenylate cyclase GRESAG 4.3 (1229 aa).

The Cytoplasmic segment spans residues Met-1–Pro-24. Residues Thr-25–Val-45 form a helical membrane-spanning segment. The Extracellular portion of the chain corresponds to Asp-46–Gln-845. N-linked (GlcNAc...) asparagine glycosylation is found at Asn-77, Asn-84, Asn-626, Asn-693, and Asn-768. The chain crosses the membrane as a helical span at residues Leu-846–Leu-866. The Cytoplasmic portion of the chain corresponds to Ala-867–Val-1229. The 155-residue stretch at Thr-889–Glu-1043 folds into the Guanylate cyclase domain. Mg(2+) is bound by residues Asp-894 and Asp-937.

The protein belongs to the adenylyl cyclase class-3 family. It depends on Mg(2+) as a cofactor.

The protein resides in the membrane. It catalyses the reaction ATP = 3',5'-cyclic AMP + diphosphate. In terms of biological role, could act as a receptor for an unknown ligand. The polypeptide is Receptor-type adenylate cyclase GRESAG 4.3 (GRESAG 4.3) (Trypanosoma brucei brucei).